The sequence spans 150 residues: D-aminoacyl-tRNA deacylase (150 aa).

The Gly-cisPro motif, important for rejection of L-amino acids signature appears at 138 to 139 (GP).

It belongs to the DTD family. In terms of assembly, homodimer.

It is found in the cytoplasm. The enzyme catalyses glycyl-tRNA(Ala) + H2O = tRNA(Ala) + glycine + H(+). It carries out the reaction a D-aminoacyl-tRNA + H2O = a tRNA + a D-alpha-amino acid + H(+). In terms of biological role, an aminoacyl-tRNA editing enzyme that deacylates mischarged D-aminoacyl-tRNAs. Also deacylates mischarged glycyl-tRNA(Ala), protecting cells against glycine mischarging by AlaRS. Acts via tRNA-based rather than protein-based catalysis; rejects L-amino acids rather than detecting D-amino acids in the active site. By recycling D-aminoacyl-tRNA to D-amino acids and free tRNA molecules, this enzyme counteracts the toxicity associated with the formation of D-aminoacyl-tRNA entities in vivo and helps enforce protein L-homochirality. This is D-aminoacyl-tRNA deacylase from Flavobacterium johnsoniae (strain ATCC 17061 / DSM 2064 / JCM 8514 / BCRC 14874 / CCUG 350202 / NBRC 14942 / NCIMB 11054 / UW101) (Cytophaga johnsonae).